We begin with the raw amino-acid sequence, 61 residues long: Small ribosomal subunit protein uS14 (61 aa).

Zn(2+)-binding residues include C24, C27, C40, and C43.

It belongs to the universal ribosomal protein uS14 family. Zinc-binding uS14 subfamily. In terms of assembly, part of the 30S ribosomal subunit. Contacts proteins S3 and S10. It depends on Zn(2+) as a cofactor.

Its function is as follows. Binds 16S rRNA, required for the assembly of 30S particles and may also be responsible for determining the conformation of the 16S rRNA at the A site. The polypeptide is Small ribosomal subunit protein uS14 (Streptococcus equi subsp. zooepidemicus (strain H70)).